A 181-amino-acid chain; its full sequence is Sodium/potassium-transporting ATPase subunit beta-1-interacting protein 3 (181 aa).

4 helical membrane passes run 2–22 (GCCTGRCSLVCLCALQLLSAL), 35–55 (APILGNFLHIIVVILGLFGTI), 62–82 (IMVYTVWTALWVTWNVFIICF), and 152–172 (VQILLSLVGFVYACYVISISM).

It belongs to the NKAIN family. In terms of assembly, interacts with ATP1B1. As to expression, detected in the brain only and specifically in neurons. Expressed in multiple regions such as cerebral cortex, thalamus, hippocampus, olfactory bulb and brainstem as well as in cerebellum with low expression in granular cell layer.

The protein resides in the cell membrane. This Mus musculus (Mouse) protein is Sodium/potassium-transporting ATPase subunit beta-1-interacting protein 3 (Nkain3).